The chain runs to 324 residues: Methionyl-tRNA formyltransferase (324 aa).

113 to 116 (SLLP) serves as a coordination point for (6S)-5,6,7,8-tetrahydrofolate.

It belongs to the Fmt family.

It carries out the reaction L-methionyl-tRNA(fMet) + (6R)-10-formyltetrahydrofolate = N-formyl-L-methionyl-tRNA(fMet) + (6S)-5,6,7,8-tetrahydrofolate + H(+). In terms of biological role, attaches a formyl group to the free amino group of methionyl-tRNA(fMet). The formyl group appears to play a dual role in the initiator identity of N-formylmethionyl-tRNA by promoting its recognition by IF2 and preventing the misappropriation of this tRNA by the elongation apparatus. In Bacteroides fragilis (strain ATCC 25285 / DSM 2151 / CCUG 4856 / JCM 11019 / LMG 10263 / NCTC 9343 / Onslow / VPI 2553 / EN-2), this protein is Methionyl-tRNA formyltransferase.